Here is a 411-residue protein sequence, read N- to C-terminus: Citrate synthase (411 aa).

Residues histidine 304 and aspartate 363 contribute to the active site.

The protein belongs to the citrate synthase family.

The catalysed reaction is oxaloacetate + acetyl-CoA + H2O = citrate + CoA + H(+). It functions in the pathway carbohydrate metabolism; tricarboxylic acid cycle; isocitrate from oxaloacetate: step 1/2. The sequence is that of Citrate synthase (gltA) from Rickettsia australis.